We begin with the raw amino-acid sequence, 199 residues long: SCO2-like protein RC0042 (199 aa).

This sequence belongs to the SCO1/2 family.

In Rickettsia conorii (strain ATCC VR-613 / Malish 7), this protein is SCO2-like protein RC0042.